Here is a 204-residue protein sequence, read N- to C-terminus: MIIKNASHEITAVKPIQYPVTGFPEIAFVGRSNVGKSSIINTLVNRKSLARVGSTPGKTRQINFFDVNGEFYLVDLPGYGFANVSKEMKASWQNLIETYLYSRKENFLKMVVMLVDIRHSPSKDDIIMYQWLKGFGLDTLIIANKVDKISRGQIHVRINDIRKVLQLDDAEKVIPFSAENRFGLEKVLAEFDNVLSIPGEEQKD.

The region spanning 22-197 (GFPEIAFVGR…LAEFDNVLSI (176 aa)) is the EngB-type G domain. GTP-binding positions include 30 to 37 (GRSNVGKS), 57 to 61 (GKTRQ), 75 to 78 (DLPG), 144 to 147 (NKVD), and 176 to 178 (FSA). Mg(2+)-binding residues include Ser-37 and Thr-59.

This sequence belongs to the TRAFAC class TrmE-Era-EngA-EngB-Septin-like GTPase superfamily. EngB GTPase family. It depends on Mg(2+) as a cofactor.

Necessary for normal cell division and for the maintenance of normal septation. The protein is Probable GTP-binding protein EngB of Ruminiclostridium cellulolyticum (strain ATCC 35319 / DSM 5812 / JCM 6584 / H10) (Clostridium cellulolyticum).